The chain runs to 402 residues: GDSL esterase/lipase At1g20120 (402 aa).

The first 35 residues, 1 to 35, serve as a signal peptide directing secretion; that stretch reads MLQDRVSGSLSSSKISRCVLFLSLFCFFLLTMHAS. The interval 41–69 is disordered; sequence RVPNPGPSPAPEPKPCPSPGPNPAPATTK. Over residues 44–64 the composition is skewed to pro residues; sequence NPGPSPAPEPKPCPSPGPNPA. The N-linked (GlcNAc...) asparagine glycan is linked to Asn73. The active-site Nucleophile is Ser85. Residues Asn314 and Asn367 are each glycosylated (N-linked (GlcNAc...) asparagine). Residues Asp375 and His378 contribute to the active site.

This sequence belongs to the 'GDSL' lipolytic enzyme family.

The protein localises to the secreted. This Arabidopsis thaliana (Mouse-ear cress) protein is GDSL esterase/lipase At1g20120.